Here is a 216-residue protein sequence, read N- to C-terminus: Hexitol phosphatase A (216 aa).

The active-site Nucleophile is Asp-9. The a divalent metal cation site is built by Asp-9 and Asp-11. Substrate-binding positions include 9-11 (DLD), 106-107 (TS), and Lys-138. Asp-11 serves as the catalytic Proton donor. An a divalent metal cation-binding site is contributed by Asp-163.

This sequence belongs to the HAD-like hydrolase superfamily. CbbY/CbbZ/Gph/YieH family. Mg(2+) is required as a cofactor. Mn(2+) serves as cofactor. It depends on Co(2+) as a cofactor.

The enzyme catalyses sugar phosphate + H2O = sugar + phosphate.. The catalysed reaction is D-mannitol 1-phosphate + H2O = D-mannitol + phosphate. It catalyses the reaction D-sorbitol 6-phosphate + H2O = D-sorbitol + phosphate. Functionally, sugar-phosphate phosphohydrolase that appears to contribute to butanol tolerance. Catalyzes the dephosphorylation of D-mannitol 1-phosphate and D-sorbitol 6-phosphate. Is also able to dephosphorylate other sugar phosphates in vitro including ribose-5-phosphate (Rib5P), 2-deoxyribose-5-phosphate, fructose-1-phosphate (Fru1P), fructose-6-phosphate (Fru6P), and glucose-6-phosphate (Glu6P). Selectively hydrolyzes beta-D-glucose-1-phosphate (bGlu1P) and has no activity with the alpha form. This Escherichia coli (strain K12) protein is Hexitol phosphatase A.